A 464-amino-acid chain; its full sequence is 3-isopropylmalate dehydratase large subunit (464 aa).

Cys337, Cys397, and Cys400 together coordinate [4Fe-4S] cluster.

The protein belongs to the aconitase/IPM isomerase family. LeuC type 1 subfamily. As to quaternary structure, heterodimer of LeuC and LeuD. The cofactor is [4Fe-4S] cluster.

The catalysed reaction is (2R,3S)-3-isopropylmalate = (2S)-2-isopropylmalate. The protein operates within amino-acid biosynthesis; L-leucine biosynthesis; L-leucine from 3-methyl-2-oxobutanoate: step 2/4. Functionally, catalyzes the isomerization between 2-isopropylmalate and 3-isopropylmalate, via the formation of 2-isopropylmaleate. This is 3-isopropylmalate dehydratase large subunit from Bacillus thuringiensis subsp. konkukian (strain 97-27).